We begin with the raw amino-acid sequence, 356 residues long: Protein-glutamate methylesterase/protein-glutamine glutaminase 2 (356 aa).

The Response regulatory domain occupies 7–124 (KVLCVDDSAL…RDGLMEYTDT (118 aa)). Asp58 carries the 4-aspartylphosphate modification. A CheB-type methylesterase domain is found at 157–349 (LLSTEKLIIL…QRVMARLATY (193 aa)). Active-site residues include Ser169, His195, and Asp291.

It belongs to the CheB family. Post-translationally, phosphorylated by CheA. Phosphorylation of the N-terminal regulatory domain activates the methylesterase activity.

The protein localises to the cytoplasm. It catalyses the reaction [protein]-L-glutamate 5-O-methyl ester + H2O = L-glutamyl-[protein] + methanol + H(+). It carries out the reaction L-glutaminyl-[protein] + H2O = L-glutamyl-[protein] + NH4(+). In terms of biological role, involved in chemotaxis. Part of a chemotaxis signal transduction system that modulates chemotaxis in response to various stimuli. Catalyzes the demethylation of specific methylglutamate residues introduced into the chemoreceptors (methyl-accepting chemotaxis proteins or MCP) by CheR. Also mediates the irreversible deamidation of specific glutamine residues to glutamic acid. The sequence is that of Protein-glutamate methylesterase/protein-glutamine glutaminase 2 from Cupriavidus pinatubonensis (strain JMP 134 / LMG 1197) (Cupriavidus necator (strain JMP 134)).